The primary structure comprises 139 residues: Cellular retinoic acid-binding protein 2 (139 aa).

Residues 21 to 31 (KALGVNMMMRK) carry the Nuclear localization signal motif. A Glycyl lysine isopeptide (Lys-Gly) (interchain with G-Cter in SUMO) cross-link involves residue K103. 134–136 (RVY) serves as a coordination point for all-trans-retinoate.

It belongs to the calycin superfamily. Fatty-acid binding protein (FABP) family. As to quaternary structure, interacts with importin alpha, RXR and RARA. Sumoylated in response to retinoic acid binding, sumoylation is critical for dissociation from ER and subsequent nuclear translocation.

It is found in the cytoplasm. Its subcellular location is the endoplasmic reticulum. The protein localises to the nucleus. In terms of biological role, transports retinoic acid to the nucleus. Regulates the access of retinoic acid to the nuclear retinoic acid receptors. The polypeptide is Cellular retinoic acid-binding protein 2 (Crabp2) (Rattus norvegicus (Rat)).